Here is a 613-residue protein sequence, read N- to C-terminus: Glutaminase 1 (613 aa).

Residues 33 to 315 are glutaminase; it reads GAVADYIPEL…LSSHYDLHML (283 aa). Substrate is bound by residues Ser75, Asn124, Glu168, Asn175, Tyr199, Tyr251, and Val269. The STAS domain occupies 345 to 457; sequence REILAAHEQE…LDTAIEWAED (113 aa). An a nucleoside 3',5'-cyclic phosphate-binding site is contributed by 480–595; the sequence is LLEGLSADEL…ERIMRNLAQL (116 aa).

The protein belongs to the glutaminase family. In terms of assembly, homotetramer.

It carries out the reaction L-glutamine + H2O = L-glutamate + NH4(+). This Bradyrhizobium diazoefficiens (strain JCM 10833 / BCRC 13528 / IAM 13628 / NBRC 14792 / USDA 110) protein is Glutaminase 1 (glsA1).